The primary structure comprises 326 residues: DNA-directed RNA polymerase subunit alpha (326 aa).

Positions 1 to 232 are alpha N-terminal domain (alpha-NTD); the sequence is MQGSARNFLK…EQLSSFVELE (232 aa). The tract at residues 246–326 is alpha C-terminal domain (alpha-CTD); sequence FDPQLLAAVD…NWPPVDLMSE (81 aa).

It belongs to the RNA polymerase alpha chain family. Homodimer. The RNAP catalytic core consists of 2 alpha, 1 beta, 1 beta' and 1 omega subunit. When a sigma factor is associated with the core the holoenzyme is formed, which can initiate transcription.

It catalyses the reaction RNA(n) + a ribonucleoside 5'-triphosphate = RNA(n+1) + diphosphate. In terms of biological role, DNA-dependent RNA polymerase catalyzes the transcription of DNA into RNA using the four ribonucleoside triphosphates as substrates. The chain is DNA-directed RNA polymerase subunit alpha from Ruthia magnifica subsp. Calyptogena magnifica.